Reading from the N-terminus, the 308-residue chain is Ribosomal RNA small subunit methyltransferase H (308 aa).

Residues 38–40, Asp58, Phe82, Asp99, and Gln106 contribute to the S-adenosyl-L-methionine site; that span reads GGH.

It belongs to the methyltransferase superfamily. RsmH family.

It is found in the cytoplasm. It catalyses the reaction cytidine(1402) in 16S rRNA + S-adenosyl-L-methionine = N(4)-methylcytidine(1402) in 16S rRNA + S-adenosyl-L-homocysteine + H(+). In terms of biological role, specifically methylates the N4 position of cytidine in position 1402 (C1402) of 16S rRNA. The chain is Ribosomal RNA small subunit methyltransferase H from Acidovorax sp. (strain JS42).